The chain runs to 442 residues: Limonoid 1-O-acetyltransferse (442 aa).

Residues His-155 and Asp-381 each act as proton acceptor in the active site.

The protein belongs to the plant acyltransferase family. In terms of assembly, monomer.

The catalysed reaction is (1S)-1-hydroxy-luvungin A + acetyl-CoA = (1S)-1-acetoxy-luvungin A + CoA. Its pathway is secondary metabolite biosynthesis; terpenoid biosynthesis. Its function is as follows. Acetyltransferase involved in the biosynthesis of limonoids triterpene natural products such as limonin, a compound with insecticidal activity responsible for the bitter taste in citrus. Catalyzes the formation of (1S)-1-acetoxy-luvungin A from (1S)-1-hydroxy-luvungin A. This Citrus sinensis (Sweet orange) protein is Limonoid 1-O-acetyltransferse.